We begin with the raw amino-acid sequence, 129 residues long: Small ribosomal subunit protein uS12 (129 aa).

Belongs to the universal ribosomal protein uS12 family. Part of the 30S ribosomal subunit. Contacts proteins S8 and S17. May interact with IF1 in the 30S initiation complex.

Functionally, with S4 and S5 plays an important role in translational accuracy. Interacts with and stabilizes bases of the 16S rRNA that are involved in tRNA selection in the A site and with the mRNA backbone. Located at the interface of the 30S and 50S subunits, it traverses the body of the 30S subunit contacting proteins on the other side and probably holding the rRNA structure together. The combined cluster of proteins S8, S12 and S17 appears to hold together the shoulder and platform of the 30S subunit. The polypeptide is Small ribosomal subunit protein uS12 (Rickettsia typhi (strain ATCC VR-144 / Wilmington)).